We begin with the raw amino-acid sequence, 709 residues long: Ribosomal RNA large subunit methyltransferase K/L (709 aa).

In terms of domain architecture, THUMP spans 43–154 (LAYRITLWTR…NGVITIAMNF (112 aa)).

This sequence belongs to the methyltransferase superfamily. RlmKL family.

It is found in the cytoplasm. The catalysed reaction is guanosine(2445) in 23S rRNA + S-adenosyl-L-methionine = N(2)-methylguanosine(2445) in 23S rRNA + S-adenosyl-L-homocysteine + H(+). It catalyses the reaction guanosine(2069) in 23S rRNA + S-adenosyl-L-methionine = N(2)-methylguanosine(2069) in 23S rRNA + S-adenosyl-L-homocysteine + H(+). Functionally, specifically methylates the guanine in position 2445 (m2G2445) and the guanine in position 2069 (m7G2069) of 23S rRNA. This is Ribosomal RNA large subunit methyltransferase K/L from Shewanella baltica (strain OS155 / ATCC BAA-1091).